We begin with the raw amino-acid sequence, 279 residues long: Undecaprenyl-diphosphatase (279 aa).

Helical transmembrane passes span 1–21 (MVLE…LPIS), 39–59 (GRFF…LYFF), 96–116 (LLLV…VRFV), 128–148 (FTMG…DALF), 155–175 (IFQI…FAII), 201–221 (FSFL…LVAG), 231–251 (YSLI…SALL), and 259–279 (FVLF…VSFF).

It belongs to the UppP family.

The protein resides in the cell membrane. It carries out the reaction di-trans,octa-cis-undecaprenyl diphosphate + H2O = di-trans,octa-cis-undecaprenyl phosphate + phosphate + H(+). Functionally, catalyzes the dephosphorylation of undecaprenyl diphosphate (UPP). Confers resistance to bacitracin. The protein is Undecaprenyl-diphosphatase of Tropheryma whipplei (strain TW08/27) (Whipple's bacillus).